We begin with the raw amino-acid sequence, 352 residues long: Glycerol-1-phosphate dehydrogenase [NAD(P)+] (352 aa).

NAD(+)-binding positions include 91 to 95 (GRVID) and 113 to 116 (TVAS). Residue Asp-118 coordinates substrate. Ser-122 contributes to the NAD(+) binding site. Glu-169 provides a ligand contact to substrate. 2 residues coordinate Zn(2+): Glu-169 and His-249. A substrate-binding site is contributed by His-253. Residue His-269 participates in Zn(2+) binding.

Belongs to the glycerol-1-phosphate dehydrogenase family. In terms of assembly, homodimer. The cofactor is Zn(2+).

It localises to the cytoplasm. The enzyme catalyses sn-glycerol 1-phosphate + NAD(+) = dihydroxyacetone phosphate + NADH + H(+). It carries out the reaction sn-glycerol 1-phosphate + NADP(+) = dihydroxyacetone phosphate + NADPH + H(+). It participates in membrane lipid metabolism; glycerophospholipid metabolism. Catalyzes the NAD(P)H-dependent reduction of dihydroxyacetonephosphate (DHAP or glycerone phosphate) to glycerol 1-phosphate (G1P). The G1P thus generated is used as the glycerophosphate backbone of phospholipids in the cellular membranes of Archaea. This chain is Glycerol-1-phosphate dehydrogenase [NAD(P)+], found in Caldivirga maquilingensis (strain ATCC 700844 / DSM 13496 / JCM 10307 / IC-167).